Here is an 84-residue protein sequence, read N- to C-terminus: U4-theraphotoxin-Hhn1n (84 aa).

Residues M1–A22 form the signal peptide. Residues E23–R47 constitute a propeptide that is removed on maturation. Intrachain disulfides connect C51/C65, C55/C76, and C70/C81.

It belongs to the neurotoxin 12 (Hwtx-2) family. 02 (Hwtx-2) subfamily. In terms of tissue distribution, expressed by the venom gland.

The protein localises to the secreted. In terms of biological role, postsynaptic neurotoxin. The polypeptide is U4-theraphotoxin-Hhn1n (Cyriopagopus hainanus (Chinese bird spider)).